We begin with the raw amino-acid sequence, 247 residues long: MIIYPTMELQNGRCVTLERGRLDAPMLWHVDPFETVSGWASAGAEWMHLTDLDAVAGTSGNAELVEQIIRKAEIPVQLAGGMRSRERIEHWIDKGAGRIVIGTLAARDPELVKELAKRHPDQIVLSVDVWQGHVMTDGWRSQSAYTPEAFIDAFADVPFAAIVVTDIDSDVEEVEAKLGLISGLAAHSRTPVIASGVVRGADDISRLAYVPNIAGALVGRALFRKSLSLEDALSIAASAHERVAQFQ.

The active-site Proton acceptor is E8. The Proton donor role is filled by D128.

The protein belongs to the HisA/HisF family.

Its subcellular location is the cytoplasm. The catalysed reaction is 1-(5-phospho-beta-D-ribosyl)-5-[(5-phospho-beta-D-ribosylamino)methylideneamino]imidazole-4-carboxamide = 5-[(5-phospho-1-deoxy-D-ribulos-1-ylimino)methylamino]-1-(5-phospho-beta-D-ribosyl)imidazole-4-carboxamide. It functions in the pathway amino-acid biosynthesis; L-histidine biosynthesis; L-histidine from 5-phospho-alpha-D-ribose 1-diphosphate: step 4/9. This Ruegeria pomeroyi (strain ATCC 700808 / DSM 15171 / DSS-3) (Silicibacter pomeroyi) protein is 1-(5-phosphoribosyl)-5-[(5-phosphoribosylamino)methylideneamino] imidazole-4-carboxamide isomerase 2.